The chain runs to 144 residues: Superoxide dismutase [Mn] 1 (144 aa).

3 residues coordinate Mn(2+): histidine 42, aspartate 124, and histidine 128.

The protein belongs to the iron/manganese superoxide dismutase family. Mn(2+) is required as a cofactor.

It carries out the reaction 2 superoxide + 2 H(+) = H2O2 + O2. Its function is as follows. Destroys superoxide anion radicals which are normally produced within the cells and which are toxic to biological systems. The protein is Superoxide dismutase [Mn] 1 (sod1) of Haloferax mediterranei (Halobacterium mediterranei).